A 122-amino-acid chain; its full sequence is Large ribosomal subunit protein bL17 (122 aa).

Belongs to the bacterial ribosomal protein bL17 family. As to quaternary structure, part of the 50S ribosomal subunit. Contacts protein L32.

The protein is Large ribosomal subunit protein bL17 of Neisseria gonorrhoeae (strain ATCC 700825 / FA 1090).